Reading from the N-terminus, the 97-residue chain is Osteocalcin (97 aa).

Positions Met1–Thr18 are cleaved as a signal peptide. Positions Ser19–Arg52 are excised as a propeptide. In terms of domain architecture, Gla spans Ala53–Gly93. Ca(2+)-binding residues include Glu63, Glu67, Glu70, and Glu76. Glu63, Glu67, and Glu70 each carry 4-carboxyglutamate. A disulfide bridge links Cys69 with Cys75.

This sequence belongs to the osteocalcin/matrix Gla protein family. Post-translationally, gamma-carboxyglutamate residues are formed by vitamin K dependent carboxylation by GGCX. These residues are essential for the binding of calcium.

It localises to the secreted. Its function is as follows. The carboxylated form is one of the main organic components of the bone matrix, which constitutes 1-2% of the total bone protein. The carboxylated form binds strongly to apatite and calcium. This Sparus aurata (Gilthead sea bream) protein is Osteocalcin (bglap).